The primary structure comprises 454 residues: Tyrosine aminotransferase (454 aa).

An N-acetylmethionine modification is found at M1. N6-(pyridoxal phosphate)lysine is present on K280. A Phosphoserine modification is found at S448.

The protein belongs to the class-I pyridoxal-phosphate-dependent aminotransferase family. As to quaternary structure, homodimer. Pyridoxal 5'-phosphate serves as cofactor.

The enzyme catalyses L-tyrosine + 2-oxoglutarate = 3-(4-hydroxyphenyl)pyruvate + L-glutamate. Its pathway is amino-acid degradation; L-phenylalanine degradation; acetoacetate and fumarate from L-phenylalanine: step 2/6. Its function is as follows. Transaminase involved in tyrosine breakdown. Converts tyrosine to p-hydroxyphenylpyruvate. Can catalyze the reverse reaction, using glutamic acid, with 2-oxoglutarate as cosubstrate (in vitro). Has much lower affinity and transaminase activity towards phenylalanine. The protein is Tyrosine aminotransferase (TAT) of Homo sapiens (Human).